Reading from the N-terminus, the 326-residue chain is Putative UPF0725 protein At1g28500 (326 aa).

A compositionally biased stretch (basic and acidic residues) spans 301-320 (KDTEQRSKTRQSEEKVESSQ). Positions 301 to 326 (KDTEQRSKTRQSEEKVESSQKRSRLC) are disordered.

Belongs to the UPF0725 (EMB2204) family.

This chain is Putative UPF0725 protein At1g28500, found in Arabidopsis thaliana (Mouse-ear cress).